We begin with the raw amino-acid sequence, 63 residues long: Conotoxin Pu5.4 (63 aa).

An N-terminal signal peptide occupies residues Met-1–Ala-22. Positions Thr-23–Arg-50 are excised as a propeptide. At Trp-62 the chain carries Tryptophan amide.

Belongs to the conotoxin T superfamily. In terms of processing, contains 2 disulfide bonds that can be either 'C1-C3, C2-C4' or 'C1-C4, C2-C3', since these disulfide connectivities have been observed for conotoxins with cysteine framework V (for examples, see AC P0DQQ7 and AC P81755). Expressed by the venom duct.

It is found in the secreted. In Conus pulicarius (Flea-bitten cone), this protein is Conotoxin Pu5.4.